An 84-amino-acid polypeptide reads, in one-letter code: U7-ctenitoxin-Pn1a (84 aa).

An N-terminal signal peptide occupies residues 1–17 (MKLCILLVVLLITVVRA). Positions 18 to 38 (EEDILENEAEDISPAIKERSA) are excised as a propeptide. 4 disulfide bridges follow: Cys41/Cys56, Cys48/Cys61, Cys55/Cys78, and Cys63/Cys76.

In terms of tissue distribution, expressed by the venom gland.

The protein localises to the secreted. In terms of biological role, antagonist of L-type calcium channels (Cav1/CACNA1). Causes paralysis in the posterior limbs and gradual decreases in movement and aggression during 24 hours at dose levels of 5 ug per mouse. This chain is U7-ctenitoxin-Pn1a, found in Phoneutria nigriventer (Brazilian armed spider).